A 392-amino-acid chain; its full sequence is Histidinol-phosphate aminotransferase (392 aa).

Positions 1–24 (MSAVLKDPIPAPGRPESTRPEPRP) are disordered. Lys236 carries the post-translational modification N6-(pyridoxal phosphate)lysine.

Belongs to the class-II pyridoxal-phosphate-dependent aminotransferase family. Histidinol-phosphate aminotransferase subfamily. Homodimer. Pyridoxal 5'-phosphate serves as cofactor.

The catalysed reaction is L-histidinol phosphate + 2-oxoglutarate = 3-(imidazol-4-yl)-2-oxopropyl phosphate + L-glutamate. Its pathway is amino-acid biosynthesis; L-histidine biosynthesis; L-histidine from 5-phospho-alpha-D-ribose 1-diphosphate: step 7/9. This chain is Histidinol-phosphate aminotransferase, found in Xanthobacter autotrophicus (strain ATCC BAA-1158 / Py2).